Consider the following 189-residue polypeptide: Peptidyl-tRNA hydrolase (189 aa).

Tyr15 is a binding site for tRNA. His20 (proton acceptor) is an active-site residue. Residues Phe66, Asn68, and Asn114 each contribute to the tRNA site.

This sequence belongs to the PTH family. As to quaternary structure, monomer.

Its subcellular location is the cytoplasm. It catalyses the reaction an N-acyl-L-alpha-aminoacyl-tRNA + H2O = an N-acyl-L-amino acid + a tRNA + H(+). Its function is as follows. Hydrolyzes ribosome-free peptidyl-tRNAs (with 1 or more amino acids incorporated), which drop off the ribosome during protein synthesis, or as a result of ribosome stalling. Catalyzes the release of premature peptidyl moieties from peptidyl-tRNA molecules trapped in stalled 50S ribosomal subunits, and thus maintains levels of free tRNAs and 50S ribosomes. The protein is Peptidyl-tRNA hydrolase of Streptococcus pyogenes serotype M1.